The sequence spans 284 residues: uncharacterized protein (284 aa).

One can recognise a Photolyase/cryptochrome alpha/beta domain in the interval 4–133; that stretch reads PLHLFWHRRD…AVHRQWDQLL (130 aa).

This is an uncharacterized protein from Synechococcus sp. (strain PCC 6716).